The primary structure comprises 248 residues: DNA repair protein RecO (248 aa).

The protein belongs to the RecO family.

Functionally, involved in DNA repair and RecF pathway recombination. This chain is DNA repair protein RecO, found in Oleidesulfovibrio alaskensis (strain ATCC BAA-1058 / DSM 17464 / G20) (Desulfovibrio alaskensis).